We begin with the raw amino-acid sequence, 110 residues long: UPF0132 membrane protein MJ1443 (110 aa).

The next 3 helical transmembrane spans lie at 15–35 (IEGA…YILE), 49–69 (IILF…PYGW), and 70–90 (MLSG…MYKA).

Belongs to the UPF0132 family.

The protein resides in the cell membrane. The polypeptide is UPF0132 membrane protein MJ1443 (Methanocaldococcus jannaschii (strain ATCC 43067 / DSM 2661 / JAL-1 / JCM 10045 / NBRC 100440) (Methanococcus jannaschii)).